A 132-amino-acid polypeptide reads, in one-letter code: MVMTDPIADMLTRIRNANLARHETVEIPSSKMKKAIAMILLKEGFVKAVEEIDDGKGGILKITLKYGPNKERVISGLKRISKPGLRVYAKHDELPRVLGGLGIAIISTSKGIMTDKEARKAGLGGEVICYVW.

This sequence belongs to the universal ribosomal protein uS8 family. Part of the 30S ribosomal subunit. Contacts proteins S5 and S12.

In terms of biological role, one of the primary rRNA binding proteins, it binds directly to 16S rRNA central domain where it helps coordinate assembly of the platform of the 30S subunit. The protein is Small ribosomal subunit protein uS8 (rpsH) of Caldanaerobacter subterraneus subsp. tengcongensis (strain DSM 15242 / JCM 11007 / NBRC 100824 / MB4) (Thermoanaerobacter tengcongensis).